We begin with the raw amino-acid sequence, 438 residues long: DEAD-box ATP-dependent RNA helicase 58, chloroplastic (438 aa).

The transit peptide at 1-44 (MAAFSGCASPLSTTLRSGLAPFTLRHRLRLRRLRASAATLREVC) directs the protein to the chloroplast. The short motif at 41-69 (REVCAGRVPEHVLQRAEEVGYVVPTEVQE) is the Q motif element. Residues 72-245 (LPVLLSGQDC…DCVQHKWTKT (174 aa)) form the Helicase ATP-binding domain. 85-92 (AQTGSGKT) is a binding site for ATP. A DEAD box motif is present at residues 190-193 (DEVD). Residues 274 to 436 (RLHVLLSLLE…ELPVESMFAF (163 aa)) enclose the Helicase C-terminal domain.

The protein belongs to the DEAD box helicase family.

It is found in the plastid. The protein localises to the chloroplast. It catalyses the reaction ATP + H2O = ADP + phosphate + H(+). This chain is DEAD-box ATP-dependent RNA helicase 58, chloroplastic, found in Oryza sativa subsp. japonica (Rice).